A 707-amino-acid polypeptide reads, in one-letter code: Elongation factor G 2 (707 aa).

Positions 8-290 (ERYRNIGISA…AVIDYLPSPA (283 aa)) constitute a tr-type G domain. GTP contacts are provided by residues 17–24 (AHIDAGKT), 88–92 (DTPGH), and 142–145 (NKMD).

The protein belongs to the TRAFAC class translation factor GTPase superfamily. Classic translation factor GTPase family. EF-G/EF-2 subfamily.

It localises to the cytoplasm. Catalyzes the GTP-dependent ribosomal translocation step during translation elongation. During this step, the ribosome changes from the pre-translocational (PRE) to the post-translocational (POST) state as the newly formed A-site-bound peptidyl-tRNA and P-site-bound deacylated tRNA move to the P and E sites, respectively. Catalyzes the coordinated movement of the two tRNA molecules, the mRNA and conformational changes in the ribosome. This is Elongation factor G 2 from Bordetella bronchiseptica (strain ATCC BAA-588 / NCTC 13252 / RB50) (Alcaligenes bronchisepticus).